A 338-amino-acid chain; its full sequence is Lipoate-protein ligase A (338 aa).

A BPL/LPL catalytic domain is found at 29 to 216; that stretch reads PATQRVLFLW…AFFAHYGERV (188 aa). Residues R71, 76-79, and K134 each bind ATP; that span reads GAVF. K134 provides a ligand contact to (R)-lipoate.

It belongs to the LplA family. Monomer.

The protein resides in the cytoplasm. The enzyme catalyses L-lysyl-[lipoyl-carrier protein] + (R)-lipoate + ATP = N(6)-[(R)-lipoyl]-L-lysyl-[lipoyl-carrier protein] + AMP + diphosphate + H(+). It functions in the pathway protein modification; protein lipoylation via exogenous pathway; protein N(6)-(lipoyl)lysine from lipoate: step 1/2. The protein operates within protein modification; protein lipoylation via exogenous pathway; protein N(6)-(lipoyl)lysine from lipoate: step 2/2. Functionally, catalyzes both the ATP-dependent activation of exogenously supplied lipoate to lipoyl-AMP and the transfer of the activated lipoyl onto the lipoyl domains of lipoate-dependent enzymes. The protein is Lipoate-protein ligase A of Salmonella arizonae (strain ATCC BAA-731 / CDC346-86 / RSK2980).